The sequence spans 361 residues: Putative agmatine deiminase (361 aa).

Cys-354 acts as the Amidino-cysteine intermediate in catalysis.

It belongs to the agmatine deiminase family.

It catalyses the reaction agmatine + H2O = N-carbamoylputrescine + NH4(+). The chain is Putative agmatine deiminase from Streptococcus pneumoniae (strain 70585).